A 274-amino-acid polypeptide reads, in one-letter code: Thiamine kinase (274 aa).

The protein belongs to the thiamine kinase family.

It carries out the reaction thiamine + ATP = thiamine phosphate + ADP + H(+). It functions in the pathway cofactor biosynthesis; thiamine diphosphate biosynthesis; thiamine phosphate from thiamine: step 1/1. Its function is as follows. Catalyzes the ATP-dependent phosphorylation of thiamine to thiamine phosphate. Is involved in thiamine salvage. The polypeptide is Thiamine kinase (Escherichia coli O45:K1 (strain S88 / ExPEC)).